A 214-amino-acid polypeptide reads, in one-letter code: MARADDPDERKTQGGHGDRRRREFRGGEQVVRAGTLLLAATDLTEPTFRRSVVYIMEHNDSGSLGVVINRPSETSLADVLPRWSALAADPGTLYFGGPVKRDAALCLGTLKVGASTAGVPGLRRIDGRVVLVDLAADPERIAPLVEGIRVFAGYAGWTFGQLEGELDNEDWIVLSALPTDPISAARPDLWADVLRRQPLPMSLLATHPIEVERN.

A disordered region spans residues 1 to 24 (MARADDPDERKTQGGHGDRRRREF).

Belongs to the UPF0301 (AlgH) family.

This Nocardia farcinica (strain IFM 10152) protein is UPF0301 protein NFA_55110.